The following is a 108-amino-acid chain: UPF0145 protein Acel_2109 (108 aa).

It belongs to the UPF0145 family.

This is UPF0145 protein Acel_2109 from Acidothermus cellulolyticus (strain ATCC 43068 / DSM 8971 / 11B).